The following is a 142-amino-acid chain: Large ribosomal subunit protein uL11 (142 aa).

The protein belongs to the universal ribosomal protein uL11 family. As to quaternary structure, part of the ribosomal stalk of the 50S ribosomal subunit. Interacts with L10 and the large rRNA to form the base of the stalk. L10 forms an elongated spine to which L12 dimers bind in a sequential fashion forming a multimeric L10(L12)X complex. In terms of processing, one or more lysine residues are methylated.

Forms part of the ribosomal stalk which helps the ribosome interact with GTP-bound translation factors. This chain is Large ribosomal subunit protein uL11, found in Liberibacter asiaticus (Citrus greening disease).